The primary structure comprises 346 residues: Putative [LysW]-L-2-aminoadipate/[LysW]-L-glutamate phosphate reductase (346 aa).

12-15 provides a ligand contact to NADP(+); the sequence is SGFT. Residue Cys147 is part of the active site. Position 310 (Asn310) interacts with NADP(+).

Belongs to the NAGSA dehydrogenase family. Type 1 subfamily. LysY sub-subfamily.

The protein localises to the cytoplasm. The catalysed reaction is [amino-group carrier protein]-C-terminal-N-(1-carboxy-5-oxopentan-1-yl)-L-glutamine + phosphate + NADP(+) = [amino-group carrier protein]-C-terminal-N-(1-carboxy-5-phosphooxy-5-oxopentan-1-yl)-L-glutamine + NADPH + H(+). The enzyme catalyses [amino-group carrier protein]-C-terminal-gamma-(L-glutamyl-5-semialdehyde)-L-glutamate + phosphate + NADP(+) = [amino-group carrier protein]-C-terminal-gamma-(5-phospho-L-glutamyl)-L-glutamate + NADPH + H(+). It functions in the pathway amino-acid biosynthesis; L-lysine biosynthesis via AAA pathway; L-lysine from L-alpha-aminoadipate (Thermus route): step 3/5. It participates in amino-acid biosynthesis; L-arginine biosynthesis. Functionally, involved in both the arginine and lysine biosynthetic pathways. This Natronomonas pharaonis (strain ATCC 35678 / DSM 2160 / CIP 103997 / JCM 8858 / NBRC 14720 / NCIMB 2260 / Gabara) (Halobacterium pharaonis) protein is Putative [LysW]-L-2-aminoadipate/[LysW]-L-glutamate phosphate reductase.